A 209-amino-acid polypeptide reads, in one-letter code: Large ribosomal subunit protein uL3 (209 aa).

It belongs to the universal ribosomal protein uL3 family. As to quaternary structure, part of the 50S ribosomal subunit. Forms a cluster with proteins L14 and L19.

In terms of biological role, one of the primary rRNA binding proteins, it binds directly near the 3'-end of the 23S rRNA, where it nucleates assembly of the 50S subunit. The sequence is that of Large ribosomal subunit protein uL3 from Nitratidesulfovibrio vulgaris (strain ATCC 29579 / DSM 644 / CCUG 34227 / NCIMB 8303 / VKM B-1760 / Hildenborough) (Desulfovibrio vulgaris).